The sequence spans 423 residues: Serine--tRNA ligase (423 aa).

229–231 (TAE) contributes to the L-serine binding site. ATP is bound at residue 258 to 260 (RRE). Glu-281 provides a ligand contact to L-serine. ATP is bound at residue 345-348 (EISS). Ser-379 contributes to the L-serine binding site.

It belongs to the class-II aminoacyl-tRNA synthetase family. Type-1 seryl-tRNA synthetase subfamily. As to quaternary structure, homodimer. The tRNA molecule binds across the dimer.

The protein resides in the cytoplasm. The catalysed reaction is tRNA(Ser) + L-serine + ATP = L-seryl-tRNA(Ser) + AMP + diphosphate + H(+). The enzyme catalyses tRNA(Sec) + L-serine + ATP = L-seryl-tRNA(Sec) + AMP + diphosphate + H(+). The protein operates within aminoacyl-tRNA biosynthesis; selenocysteinyl-tRNA(Sec) biosynthesis; L-seryl-tRNA(Sec) from L-serine and tRNA(Sec): step 1/1. Catalyzes the attachment of serine to tRNA(Ser). Is also able to aminoacylate tRNA(Sec) with serine, to form the misacylated tRNA L-seryl-tRNA(Sec), which will be further converted into selenocysteinyl-tRNA(Sec). The polypeptide is Serine--tRNA ligase (serS1) (Methanosarcina barkeri (strain Fusaro / DSM 804)).